Consider the following 161-residue polypeptide: Small ribosomal subunit protein uS9 (161 aa).

This sequence belongs to the universal ribosomal protein uS9 family.

The chain is Small ribosomal subunit protein uS9 from Rickettsia typhi (strain ATCC VR-144 / Wilmington).